The sequence spans 115 residues: Ribosomal protein uS4-like (115 aa).

This sequence belongs to the universal ribosomal protein uS4 family.

The protein is Ribosomal protein uS4-like of Azoarcus sp. (strain BH72).